Here is a 748-residue protein sequence, read N- to C-terminus: Cytosolic phospholipase A2 (748 aa).

Positions 1–178 (MSFIDPYQHI…MKKLLGPKKS (178 aa)) are phospholipid binding. Position 2 is a phosphoserine (Ser2). The region spanning 6 to 122 (PYQHIIVEHQ…KVGEKKEVPF (117 aa)) is the C2 domain. Ca(2+) contacts are provided by Asp40, Thr41, Asp43, Asn65, Asp93, Ala94, and Asn95. Residues 140–739 (SCPDLRFSMA…SNVEARKFFN (600 aa)) form the PLA2c domain. Catalysis depends on Ser228, which acts as the Nucleophile. A Phosphothreonine modification is found at Thr268. The interval 427 to 458 (KHIVSNDSSDSDDEAQGPKGTENEEAEKEYQS) is disordered. Residues Ser434, Ser435, and Ser437 each carry the phosphoserine modification. At Ser505 the chain carries Phosphoserine; by MAPK. Ser515 carries the post-translational modification Phosphoserine. A Glycyl lysine isopeptide (Lys-Gly) (interchain with G-Cter in SUMO2) cross-link involves residue Lys540. The Proton acceptor role is filled by Asp548. A Glycyl lysine isopeptide (Lys-Gly) (interchain with G-Cter in SUMO2) cross-link involves residue Lys605. Ser726 and Ser728 each carry phosphoserine.

As to quaternary structure, interacts with KAT5. Post-translationally, phosphorylated at both Ser-505 and Ser-726 in response to mitogenic stimuli. As to expression, expressed in various organs including uterus, kidney, spleen, liver, heart, lung and brain (at protein level).

It localises to the cytoplasm. The protein resides in the golgi apparatus membrane. The protein localises to the nucleus envelope. It carries out the reaction a 1,2-diacyl-sn-glycero-3-phosphocholine + H2O = a 1-acyl-sn-glycero-3-phosphocholine + a fatty acid + H(+). The catalysed reaction is a 1-O-alkyl-2-acyl-sn-glycero-3-phosphocholine + H2O = a 1-O-alkyl-sn-glycero-3-phosphocholine + a fatty acid + H(+). The enzyme catalyses a 1-acyl-sn-glycero-3-phosphocholine + H2O = sn-glycerol 3-phosphocholine + a fatty acid + H(+). It catalyses the reaction 1-hexadecanoyl-2-(5Z,8Z,11Z,14Z-eicosatetraenoyl)-sn-glycero-3-phosphocholine + H2O = 1-hexadecanoyl-sn-glycero-3-phosphocholine + (5Z,8Z,11Z,14Z)-eicosatetraenoate + H(+). It carries out the reaction 1,2-di-(5Z,8Z,11Z,14Z-eicosatetraenoyl)-sn-glycero-3-phosphocholine + H2O = 1-(5Z,8Z,11Z,14Z-eicosatetraenoyl)-sn-glycero-3-phosphocholine + (5Z,8Z,11Z,14Z)-eicosatetraenoate + H(+). The catalysed reaction is 1-octadecanoyl-2-(5Z,8Z,11Z,14Z-eicosatetraenoyl)-sn-glycero-3-phosphocholine + H2O = 1-octadecanoyl-sn-glycero-3-phosphocholine + (5Z,8Z,11Z,14Z)-eicosatetraenoate + H(+). The enzyme catalyses 1-hexadecanoyl-2-(9Z,12Z-octadecadienoyl)-sn-glycero-3-phosphocholine + H2O = (9Z,12Z)-octadecadienoate + 1-hexadecanoyl-sn-glycero-3-phosphocholine + H(+). It catalyses the reaction 1-octadecanoyl-2-(9Z,12Z,15Z-octadecatrienoyl)-sn-glycero-3-phosphocholine + H2O = (9Z,12Z,15Z)-octadecatrienoate + 1-octadecanoyl-sn-glycero-3-phosphocholine + H(+). It carries out the reaction 1-(5Z,8Z,11Z,14Z-eicosatetraenoyl)-2-hexadecanoyl-sn-glycero-3-phosphocholine + H2O = 1-(5Z,8Z,11Z,14Z-eicosatetraenoyl)-sn-glycero-3-phosphocholine + hexadecanoate + H(+). The catalysed reaction is 1-O-hexadecyl-2-(5Z,8Z,11Z,14Z)-eicosatetraenoyl-sn-glycero-3-phosphocholine + H2O = 1-O-hexadecyl-sn-glycero-3-phosphocholine + (5Z,8Z,11Z,14Z)-eicosatetraenoate + H(+). The enzyme catalyses 1,2-di-(9Z-octadecenoyl)-sn-glycero-3-phospho-(1'-sn-glycerol) + H2O = 1-(9Z-octadecenoyl)-sn-glycero-3-phospho-(1'-sn-glycerol) + (9Z)-octadecenoate + H(+). It catalyses the reaction 1-octadecanoyl-2-(5Z,8Z,11Z,14Z-eicosatetraenoyl)-sn-glycero-3-phosphate + H2O = 1-octadecanoyl-sn-glycero-3-phosphate + (5Z,8Z,11Z,14Z)-eicosatetraenoate + H(+). It carries out the reaction 1-hexadecanoyl-sn-glycero-3-phosphocholine + H2O = sn-glycerol 3-phosphocholine + hexadecanoate + H(+). The catalysed reaction is 2-(prostaglandin E2)-sn-glycero-3-phosphoethanolamine + H2O = sn-glycero-3-phosphoethanolamine + prostaglandin E2 + H(+). The enzyme catalyses 2-[(15S)-hydroxy-(5Z,8Z,11Z,13E)-eicosatetraenoyl]-sn-glycero-3-phosphocholine + H2O = (15S)-hydroxy-(5Z,8Z,11Z,13E)-eicosatetraenoate + sn-glycerol 3-phosphocholine + H(+). It catalyses the reaction 2-[(15R)-hydroxy-(5Z,8Z,11Z,13E)-eicosatetraenoyl]-sn-glycero-3-phosphocholine + H2O = (15R)-hydroxy-(5Z,8Z,11Z,13E)-eicosatetraenoate + sn-glycerol 3-phosphocholine + H(+). It carries out the reaction 2-(prostaglandin E2)-sn-glycero-3-phosphocholine + H2O = prostaglandin E2 + sn-glycerol 3-phosphocholine + H(+). The catalysed reaction is 2-[(11R)-hydroxy-(5Z,8Z,12E,14Z)-eicosatetraenoyl]-sn-glycero-3-phosphocholine + H2O = (11R)-hydroxy-(5Z,8Z,12E,14Z)-eicosatetraenoate + sn-glycerol 3-phosphocholine + H(+). The enzyme catalyses 1-(5Z,8Z,11Z,14Z-eicosatetraenoyl)-2-O-hexadecyl-sn-glycero-3-phosphocholine + H2O = 2-O-hexadecyl-sn-glycero-3-phosphocholine + (5Z,8Z,11Z,14Z)-eicosatetraenoate + H(+). It catalyses the reaction 1-octadecanoyl-2-(5Z,8Z,11Z,14Z-eicosatetraenoyl)-sn-glycero-3-phosphocholine + glycerol = 1-(5Z,8Z,11Z,14Z-eicosatetraenoyl)-glycerol + 1-octadecanoyl-sn-glycero-3-phosphocholine. It carries out the reaction 1-octadecanoyl-2-(9Z,12Z,15Z-octadecatrienoyl)-sn-glycero-3-phosphocholine + glycerol = 1-(9Z,12Z,15Z-octadecatrienoyl)-glycerol + 1-octadecanoyl-sn-glycero-3-phosphocholine. Its pathway is membrane lipid metabolism; glycerophospholipid metabolism. The protein operates within lipid metabolism; arachidonate metabolism. It participates in lipid metabolism; prostaglandin biosynthesis. It functions in the pathway lipid metabolism; leukotriene B4 biosynthesis. With respect to regulation, activated by cytosolic calcium, which is necessary for binding to membrane lipids. Activated by phosphorylation in response to mitogenic stimuli. Stimulated by agonists such as ATP and thrombin. In terms of biological role, has primarily calcium-dependent phospholipase and lysophospholipase activities, with a major role in membrane lipid remodeling and biosynthesis of lipid mediators of the inflammatory response. Plays an important role in embryo implantation and parturition through its ability to trigger prostanoid production. Preferentially hydrolyzes the ester bond of the fatty acyl group attached at sn-2 position of phospholipids (phospholipase A2 activity). Selectively hydrolyzes sn-2 arachidonoyl group from membrane phospholipids, providing the precursor for eicosanoid biosynthesis via the cyclooxygenase pathway. In an alternative pathway of eicosanoid biosynthesis, hydrolyzes sn-2 fatty acyl chain of eicosanoid lysophopholipids to release free bioactive eicosanoids. Hydrolyzes the ester bond of the fatty acyl group attached at sn-1 position of phospholipids (phospholipase A1 activity) only if an ether linkage rather than an ester linkage is present at the sn-2 position. This hydrolysis is not stereospecific. Has calcium-independent phospholipase A2 and lysophospholipase activities in the presence of phosphoinositides. Has O-acyltransferase activity. Catalyzes the transfer of fatty acyl chains from phospholipids to a primary hydroxyl group of glycerol (sn-1 or sn-3), potentially contributing to monoacylglycerol synthesis. The protein is Cytosolic phospholipase A2 (Pla2g4a) of Mus musculus (Mouse).